We begin with the raw amino-acid sequence, 118 residues long: Small ribosomal subunit protein uS13 (118 aa).

The interval 94–118 (SLPLRGQRTKTNARTRKGPRKPIKK) is disordered.

It belongs to the universal ribosomal protein uS13 family. As to quaternary structure, part of the 30S ribosomal subunit. Forms a loose heterodimer with protein S19. Forms two bridges to the 50S subunit in the 70S ribosome.

Located at the top of the head of the 30S subunit, it contacts several helices of the 16S rRNA. In the 70S ribosome it contacts the 23S rRNA (bridge B1a) and protein L5 of the 50S subunit (bridge B1b), connecting the 2 subunits; these bridges are implicated in subunit movement. Contacts the tRNAs in the A and P-sites. In Shewanella oneidensis (strain ATCC 700550 / JCM 31522 / CIP 106686 / LMG 19005 / NCIMB 14063 / MR-1), this protein is Small ribosomal subunit protein uS13.